We begin with the raw amino-acid sequence, 194 residues long: Fe/S biogenesis protein NfuA (194 aa).

[4Fe-4S] cluster is bound by residues Cys151 and Cys154.

Belongs to the NfuA family. In terms of assembly, homodimer. The cofactor is [4Fe-4S] cluster.

Involved in iron-sulfur cluster biogenesis. Binds a 4Fe-4S cluster, can transfer this cluster to apoproteins, and thereby intervenes in the maturation of Fe/S proteins. Could also act as a scaffold/chaperone for damaged Fe/S proteins. In Vibrio vulnificus (strain CMCP6), this protein is Fe/S biogenesis protein NfuA.